The primary structure comprises 218 residues: Ribose-5-phosphate isomerase A (218 aa).

Substrate is bound by residues 28-31 (TGST), 81-84 (DGAD), and 94-97 (KGGG). Catalysis depends on Glu103, which acts as the Proton acceptor. Lys121 serves as a coordination point for substrate.

It belongs to the ribose 5-phosphate isomerase family. As to quaternary structure, homodimer.

It carries out the reaction aldehydo-D-ribose 5-phosphate = D-ribulose 5-phosphate. Its pathway is carbohydrate degradation; pentose phosphate pathway; D-ribose 5-phosphate from D-ribulose 5-phosphate (non-oxidative stage): step 1/1. In terms of biological role, catalyzes the reversible conversion of ribose-5-phosphate to ribulose 5-phosphate. The sequence is that of Ribose-5-phosphate isomerase A from Pseudoalteromonas atlantica (strain T6c / ATCC BAA-1087).